The chain runs to 2297 residues: Serine/threonine-protein kinase WNK2 (2297 aa).

A compositionally biased stretch (basic and acidic residues) spans 1-10; that stretch reads MDGDGGRRDV. Disordered regions lie at residues 1–75 and 89–183; these read MDGD…QRRV and ARGR…EDDL. 2 positions are modified to omega-N-methylarginine: Arg19 and Arg30. Ser45 is subject to Phosphoserine. The span at 92-120 shows a compositional bias: low complexity; the sequence is RPAAPAPAALVAQPGAPGAPADAGPEPVG. Residues 142-172 are compositionally biased toward basic and acidic residues; sequence GPREEAAATVRKEDEGAAEAKPEPGRTRRDE. Residues 173-182 are compositionally biased toward acidic residues; sequence PEEEEDDEDD. Residues 195 to 453 enclose the Protein kinase domain; the sequence is LKFDIELGRG…IKDLLSHAFF (259 aa). ATP is bound by residues Ser205, 275–278, and Lys325; that span reads TELM. Catalysis depends on Asp342, which acts as the Proton acceptor. Phosphoserine; by autocatalysis occurs at positions 352 and 356. A Phosphoserine modification is found at Ser560. Disordered stretches follow at residues 579 to 630, 699 to 751, 917 to 1022, 1117 to 1185, 1262 to 1297, 1323 to 1345, 1374 to 1480, and 1492 to 1586; these read AQAG…DSQS, FPDP…PVVP, PQMA…PGSQ, PVQE…ERAS, SEDT…SQAN, APEA…ASQG, SAQS…HEAP, and PCTP…DSTI. Residues 604–625 are compositionally biased toward polar residues; it reads PTSATSLASDSTFDSGQGSTVY. Composition is skewed to pro residues over residues 709-740 and 939-1007; these read VLPP…PTPL and PPQP…PLQP. Position 1150 is a phosphoserine (Ser1150). Positions 1167 to 1178 are enriched in basic residues; sequence ARKHHRRSTRAR. Ser1262 carries the post-translational modification Phosphoserine. Polar residues predominate over residues 1392-1406; that stretch reads SKEQPSFLASQQLLS. The span at 1411–1426 shows a compositional bias: pro residues; it reads SNPPGAPPAPLAPSSP. 2 stretches are compositionally biased toward polar residues: residues 1439-1453 and 1461-1473; these read ATST…TASQ and QGLT…SQPL. Residues 1510-1520 are compositionally biased toward pro residues; the sequence is EPLPPPAPEPS. Residues 1526-1544 show a composition bias toward low complexity; the sequence is PQPALGQPAPLLPAAVGAV. Residues 1552–1565 show a composition bias toward pro residues; that stretch reads PSPPLGPTVPPQPP. Residue Ser1588 is modified to Phosphoserine. Positions 1621–1631 are enriched in basic and acidic residues; that stretch reads TLEPLRGDQPR. A disordered region spans residues 1621–1865; sequence TLEPLRGDQP…PVQKQASLPV (245 aa). The segment covering 1675–1688 has biased composition (polar residues); that stretch reads QGTSSSMTAESSPR. A Phosphoserine modification is found at Ser1685. Basic and acidic residues predominate over residues 1721–1731; the sequence is ARVEPTDRDGG. Residues Ser1736, Ser1817, Ser1818, Ser1862, and Ser1889 each carry the phosphoserine modification. Disordered regions lie at residues 1970–1990 and 2011–2031; these read NVGF…SKSK and TGHL…QASV. The segment covering 1981–1990 has biased composition (basic residues); it reads GRRRKTSKSK. Ser2067 is subject to Phosphoserine. Disordered regions lie at residues 2123–2142 and 2269–2297; these read SRSS…QPAL and CCGH…PVRS. A compositionally biased stretch (polar residues) spans 2272–2289; that stretch reads HSTQPRGGQRVGSKTASF.

It belongs to the protein kinase superfamily. Ser/Thr protein kinase family. WNK subfamily. As to quaternary structure, forms a complex with the phosphorylated form of STK39. It depends on Mg(2+) as a cofactor. In terms of processing, autophosphorylated. Autophosphorylation at Ser-352 and Ser-356 promotes its activity. In terms of tissue distribution, expressed in various cancer cell lines (at protein level). Predominantly expressed in heart, brain, skeletal muscle and colon.

It localises to the cytoplasm. It is found in the cell membrane. It catalyses the reaction L-seryl-[protein] + ATP = O-phospho-L-seryl-[protein] + ADP + H(+). The catalysed reaction is L-threonyl-[protein] + ATP = O-phospho-L-threonyl-[protein] + ADP + H(+). Activation requires autophosphorylation of Ser-356 and, to a lower extent, Ser-352. In terms of biological role, serine/threonine-protein kinase component of the WNK2-SPAK/OSR1 kinase cascade, which plays an important role in the regulation of electrolyte homeostasis, cell signaling, survival, and proliferation. The WNK2-SPAK/OSR1 kinase cascade is composed of WNK2, which mediates phosphorylation and activation of downstream kinases OXSR1/OSR1 and STK39/SPAK. Following activation, OXSR1/OSR1 and STK39/SPAK catalyze phosphorylation of ion cotransporters, regulating their activity. Acts as an activator and inhibitor of sodium-coupled chloride cotransporters and potassium-coupled chloride cotransporters respectively. Activates SLC12A2, SCNN1A, SCNN1B, SCNN1D and SGK1 and inhibits SLC12A5. Negatively regulates the EGF-induced activation of the ERK/MAPK-pathway and the downstream cell cycle progression. Affects MAPK3/MAPK1 activity by modulating the activity of MAP2K1 and this modulation depends on phosphorylation of MAP2K1 by PAK1. WNK2 acts by interfering with the activity of PAK1 by controlling the balance of the activity of upstream regulators of PAK1 activity, RHOA and RAC1, which display reciprocal activity. In Homo sapiens (Human), this protein is Serine/threonine-protein kinase WNK2.